A 348-amino-acid chain; its full sequence is Protein RecA (348 aa).

64 to 71 (GPESSGKT) is an ATP binding site. The span at 326 to 335 (EIDGTNKEPL) shows a compositional bias: basic and acidic residues. Residues 326–348 (EIDGTNKEPLDENEETLSLLDDE) form a disordered region. Residues 336–348 (DENEETLSLLDDE) are compositionally biased toward acidic residues.

Belongs to the RecA family.

The protein localises to the cytoplasm. Can catalyze the hydrolysis of ATP in the presence of single-stranded DNA, the ATP-dependent uptake of single-stranded DNA by duplex DNA, and the ATP-dependent hybridization of homologous single-stranded DNAs. It interacts with LexA causing its activation and leading to its autocatalytic cleavage. The sequence is that of Protein RecA from Listeria innocua serovar 6a (strain ATCC BAA-680 / CLIP 11262).